The primary structure comprises 182 residues: Large ribosomal subunit protein uL10 (182 aa).

Belongs to the universal ribosomal protein uL10 family. As to quaternary structure, part of the ribosomal stalk of the 50S ribosomal subunit. The N-terminus interacts with L11 and the large rRNA to form the base of the stalk. The C-terminus forms an elongated spine to which L12 dimers bind in a sequential fashion forming a multimeric L10(L12)X complex.

Forms part of the ribosomal stalk, playing a central role in the interaction of the ribosome with GTP-bound translation factors. The sequence is that of Large ribosomal subunit protein uL10 from Chloroflexus aurantiacus (strain ATCC 29364 / DSM 637 / Y-400-fl).